We begin with the raw amino-acid sequence, 1256 residues long: SNF2 domain-containing protein CLASSY 1 (1256 aa).

2 disordered regions span residues E269–P290 and G448–E467. The span at G278 to P290 shows a compositional bias: basic and acidic residues. A compositionally biased stretch (basic residues) spans V451–S463. Residues D699–K898 enclose the Helicase ATP-binding domain. An ATP-binding site is contributed by H712–T719. The short motif at D849–H852 is the DEAH box element. A Helicase C-terminal domain is found at F1061–Q1222.

This sequence belongs to the helicase family. As to quaternary structure, interacts with NRPD1, NRPD3 and SHH1.

The protein localises to the nucleus. It localises to the nucleoplasm. Its subcellular location is the nucleolus. Its function is as follows. Probable chromatin remodeling factor. Required for the initial establishment of DNA methylation and for accumulation of 24-nt siRNAs. May act on RNA templates by remodeling ribonucleoprotein structures and thereby influencing the availability of the RNA to polymerases. This chain is SNF2 domain-containing protein CLASSY 1 (CLSY1), found in Arabidopsis thaliana (Mouse-ear cress).